The chain runs to 542 residues: Prolyl 3-hydroxylase OGFOD1 (542 aa).

The region spanning 134 to 239 (DLESTIDMSC…RLSISGWFHG (106 aa)) is the Fe2OG dioxygenase domain. Residues His155 and Asp157 each coordinate Fe cation. Tyr169 provides a ligand contact to 2-oxoglutarate. His218 contributes to the Fe cation binding site. Arg230 serves as a coordination point for 2-oxoglutarate. The tract at residues 373 to 435 (EDEMNDKKEA…TKKESSVPTC (63 aa)) is disordered. Residues 400–416 (ENNQTAISNNSQQSNEQ) are compositionally biased toward polar residues.

The protein belongs to the TPA1 family. Monomer. Requires Fe(2+) as cofactor. L-ascorbate is required as a cofactor.

It is found in the cytoplasm. The protein resides in the nucleus. It carries out the reaction [ribosomal protein uS12]-L-proline + 2-oxoglutarate + O2 = [ribosomal protein uS12]-(3S)-3-hydroxy-L-proline + succinate + CO2. Prolyl 3-hydroxylase that catalyzes 3-hydroxylation of 'Pro-62' of small ribosomal subunit uS12 (RPS23), thereby regulating protein translation termination efficiency. Involved in stress granule formation. The sequence is that of Prolyl 3-hydroxylase OGFOD1 (OGFOD1) from Pongo abelii (Sumatran orangutan).